Consider the following 297-residue polypeptide: Nucleotide-binding protein CJA_2809 (297 aa).

Position 8–15 (8–15 (GLSGSGKT)) interacts with ATP. 59-62 (DVRN) is a GTP binding site.

This sequence belongs to the RapZ-like family.

In terms of biological role, displays ATPase and GTPase activities. The sequence is that of Nucleotide-binding protein CJA_2809 from Cellvibrio japonicus (strain Ueda107) (Pseudomonas fluorescens subsp. cellulosa).